The following is a 324-amino-acid chain: MTITTSKQLPSLAQLPETYLIELSEFGAISLSGEEQSKYLQGQVTCDVNSITESNLLVGAHCDAKGKVFSVFRLINRSSAHLLLQPTASIEGSLKELKKFGVFAKVTIDIAEELGFIALIGKQASSLIQQEFSQVPDSLTPVVQIGSTSLVYLSGEQPRYIIIDDKATITAITEKLALPTYSQSVWNLLEITQGFPILTANTSGHYVPQMLNLQAINGISFTKGCYLGQETVARMQYLGKNKRALFCLNSQLEQPFQSDDVIEKQLGENWRKAGDILAHYQADDGSCVIQAILANDGDLPILRIASQADSVVTNQTLPYTLIAE.

Tryptophan 186 lines the folate pocket.

The protein belongs to the tRNA-modifying YgfZ family.

The protein resides in the cytoplasm. In terms of biological role, folate-binding protein involved in regulating the level of ATP-DnaA and in the modification of some tRNAs. It is probably a key factor in regulatory networks that act via tRNA modification, such as initiation of chromosomal replication. In Colwellia psychrerythraea (strain 34H / ATCC BAA-681) (Vibrio psychroerythus), this protein is tRNA-modifying protein YgfZ.